Reading from the N-terminus, the 157-residue chain is MVDLKTKKVIIIGDRDGVPGEAIKLCAESAGAEVVYAATECFVUTSAGAMDLENQKRVKDLAEKYGPENVIVLLGGAEAESSGLACETVTVGDPTFAGPLAGVSLGLLCYHVAEPEIKSQIDPAVYEEQVSMMEMVMDVNAIIAEISEYRNKGCKFL.

Sec44 is an active-site residue. Residue Sec44 is a non-standard amino acid, selenocysteine.

It belongs to the GrdA family. As to quaternary structure, monomer. Component of the glycine, sarcosine and betaine reductase complexes, together with components B and C.

The catalysed reaction is acetyl phosphate + [thioredoxin]-disulfide + NH4(+) + H2O = [thioredoxin]-dithiol + glycine + phosphate + H(+). It carries out the reaction acetyl phosphate + methylamine + [thioredoxin]-disulfide + H2O = sarcosine + [thioredoxin]-dithiol + phosphate + H(+). It catalyses the reaction acetyl phosphate + trimethylamine + [thioredoxin]-disulfide + H2O = glycine betaine + [thioredoxin]-dithiol + phosphate + H(+). Its function is as follows. In the first step of glycine, betaine and sarcosine reductases, the substrate is bound to component PB via a Schiff base intermediate. Then the PB-activated substrate is nucleophilically attacked by the selenol anion of component PA to transform it to a carboxymethylated selenoether and the respective amine. By action of component PC, acetyl phosphate is formed, leaving component PA in its oxidized state. Finally component PA becomes reduced by the thioredoxin system to start a new catalytic cycle of reductive deamination. The chain is Glycine/sarcosine/betaine reductase complex component A (grdA) from Treponema denticola (strain ATCC 35405 / DSM 14222 / CIP 103919 / JCM 8153 / KCTC 15104).